The primary structure comprises 485 residues: Protein adenylyltransferase Fic (485 aa).

A helical transmembrane segment spans residues tyrosine 21–serine 43. TPR repeat units lie at residues alanine 107–histidine 140 and proline 141–asparagine 175. Positions serine 232 to glycine 237 match the Inhibitory (S/T)XXXE(G/N) motif motif. Residues glutamate 236 and valine 317–histidine 320 each bind ATP. One can recognise a Fido domain in the interval isoleucine 286–aspartate 421. Residue histidine 364 is part of the active site. ATP is bound by residues aspartate 368–arginine 375, tyrosine 400–tyrosine 401, and asparagine 408.

Belongs to the fic family. In terms of assembly, homodimer.

It localises to the membrane. The catalysed reaction is L-tyrosyl-[protein] + ATP = O-(5'-adenylyl)-L-tyrosyl-[protein] + diphosphate. The enzyme catalyses L-threonyl-[protein] + ATP = 3-O-(5'-adenylyl)-L-threonyl-[protein] + diphosphate. It carries out the reaction 3-O-(5'-adenylyl)-L-threonyl-[protein] + H2O = L-threonyl-[protein] + AMP + H(+). The side chain of Glu-236 determines which of the two opposing activities (AMPylase or de-AMPylase) will take place. In response to endoplasmic reticulum stress, mediates de-AMPylase activity. Adenylyltransferase activity is inhibited by the inhibitory helix present at the N-terminus: Glu-236 binds ATP and competes with ATP-binding at Arg-375, thereby preventing adenylyltransferase activity. In unstressed cells, disengagement of Glu-236 promotes adenylyltransferase activity. Activation dissociates ATP-binding from Glu-236, allowing ordered binding of the entire ATP moiety with the alpha-phosphate in an orientation that is productive for accepting an incoming target hydroxyl side chain. Its function is as follows. Protein that can both mediate the addition of adenosine 5'-monophosphate (AMP) to specific residues of target proteins (AMPylation), and the removal of the same modification from target proteins (de-AMPylation), depending on the context. The side chain of Glu-236 determines which of the two opposing activities (AMPylase or de-AMPylase) will take place. Acts as a key regulator of the unfolded protein response (UPR) by mediating AMPylation or de-AMPylation of Hsc70-3/BiP. In unstressed cells, acts as an adenylyltransferase by mediating AMPylation of Hsc70-3/BiP at 'Thr-518', thereby inactivating it. In response to endoplasmic reticulum stress, acts as a phosphodiesterase by mediating removal of ATP (de-AMPylation) from Hsc70-3/BiP at 'Thr-518', leading to restore HSPA5/BiP activity. The sequence is that of Protein adenylyltransferase Fic from Drosophila virilis (Fruit fly).